We begin with the raw amino-acid sequence, 207 residues long: Cytochrome c biogenesis ATP-binding export protein CcmA (207 aa).

Positions 4 to 207 constitute an ABC transporter domain; it reads LEARELLCER…RISLTQTRAA (204 aa). 36–43 provides a ligand contact to ATP; the sequence is GSNGAGKT.

This sequence belongs to the ABC transporter superfamily. CcmA exporter (TC 3.A.1.107) family. As to quaternary structure, the complex is composed of two ATP-binding proteins (CcmA) and two transmembrane proteins (CcmB).

It is found in the cell inner membrane. It catalyses the reaction heme b(in) + ATP + H2O = heme b(out) + ADP + phosphate + H(+). Part of the ABC transporter complex CcmAB involved in the biogenesis of c-type cytochromes; once thought to export heme, this seems not to be the case, but its exact role is uncertain. Responsible for energy coupling to the transport system. This is Cytochrome c biogenesis ATP-binding export protein CcmA from Shigella sonnei (strain Ss046).